Reading from the N-terminus, the 59-residue chain is UPF0434 protein Ping_0902 (59 aa).

Belongs to the UPF0434 family.

The polypeptide is UPF0434 protein Ping_0902 (Psychromonas ingrahamii (strain DSM 17664 / CCUG 51855 / 37)).